Here is a 467-residue protein sequence, read N- to C-terminus: Dihydroorotase (467 aa).

Zn(2+) is bound by residues His60 and His62. Substrate is bound by residues 62 to 64 (HFR) and Asn94. Zn(2+) contacts are provided by Glu146, His180, His234, and Asp313. Residue Asp313 is part of the active site. A substrate-binding site is contributed by His317. Positions 439–467 (KPGRGEFLEGSGKRSEEDEEENSEETGSD) are disordered. The span at 441–454 (GRGEFLEGSGKRSE) shows a compositional bias: basic and acidic residues. Acidic residues predominate over residues 455–467 (EDEEENSEETGSD).

The protein belongs to the metallo-dependent hydrolases superfamily. DHOase family. Class I DHOase subfamily. It depends on Zn(2+) as a cofactor.

The catalysed reaction is (S)-dihydroorotate + H2O = N-carbamoyl-L-aspartate + H(+). It functions in the pathway pyrimidine metabolism; UMP biosynthesis via de novo pathway; (S)-dihydroorotate from bicarbonate: step 3/3. Functionally, catalyzes the reversible cyclization of carbamoyl aspartate to dihydroorotate. The polypeptide is Dihydroorotase (Methanosarcina acetivorans (strain ATCC 35395 / DSM 2834 / JCM 12185 / C2A)).